Reading from the N-terminus, the 496-residue chain is Cytochrome P450 4ae1 (496 aa).

Residue C443 participates in heme binding.

The protein belongs to the cytochrome P450 family. It depends on heme as a cofactor.

Its subcellular location is the endoplasmic reticulum membrane. The protein resides in the microsome membrane. In terms of biological role, may be involved in the metabolism of insect hormones and in the breakdown of synthetic insecticides. The protein is Cytochrome P450 4ae1 (Cyp4ae1) of Drosophila melanogaster (Fruit fly).